The primary structure comprises 300 residues: Formylmethanofuran--tetrahydromethanopterin formyltransferase-like protein (300 aa).

This sequence belongs to the FTR family.

This chain is Formylmethanofuran--tetrahydromethanopterin formyltransferase-like protein, found in Methanopyrus kandleri (strain AV19 / DSM 6324 / JCM 9639 / NBRC 100938).